A 465-amino-acid polypeptide reads, in one-letter code: ATP synthase subunit beta (465 aa).

Residue 148 to 155 (GGAGVGKT) participates in ATP binding.

This sequence belongs to the ATPase alpha/beta chains family. As to quaternary structure, F-type ATPases have 2 components, CF(1) - the catalytic core - and CF(0) - the membrane proton channel. CF(1) has five subunits: alpha(3), beta(3), gamma(1), delta(1), epsilon(1). CF(0) has three main subunits: a(1), b(2) and c(9-12). The alpha and beta chains form an alternating ring which encloses part of the gamma chain. CF(1) is attached to CF(0) by a central stalk formed by the gamma and epsilon chains, while a peripheral stalk is formed by the delta and b chains.

It localises to the cell inner membrane. The enzyme catalyses ATP + H2O + 4 H(+)(in) = ADP + phosphate + 5 H(+)(out). In terms of biological role, produces ATP from ADP in the presence of a proton gradient across the membrane. The catalytic sites are hosted primarily by the beta subunits. The chain is ATP synthase subunit beta from Neisseria meningitidis serogroup C (strain 053442).